Here is a 1044-residue protein sequence, read N- to C-terminus: Unconventional myosin-Ic (1044 aa).

The region spanning 28 to 712 (GVQDFVLLEN…TLFATEDSLE (685 aa)) is the Myosin motor domain. ATP contacts are provided by residues Asn69, Tyr77, 120–129 (SGESGAGKTE), and 173–177 (NDNSS). Lys364 carries the N6-methyllysine modification. Ser389 carries the post-translational modification Phosphoserine. N6-acetyllysine is present on Lys467. Residue Ser517 is modified to Phosphoserine. The actin-binding stretch occupies residues 589 to 611 (LLQLVEILRSKEPAYIRCIKPND). IQ domains lie at 715–744 (RQSL…SAIC) and 738–767 (VKRS…AAQT). A phosphoserine mark is found at Ser845 and Ser1022. The TH1 domain maps to 866 to 1040 (KDNYPQSVPR…NGHLAVVAPR (175 aa)).

It belongs to the TRAFAC class myosin-kinesin ATPase superfamily. Myosin family. As to quaternary structure, interacts (via its IQ motifs) with CABP1 and CIB1; the interaction with CABP1 and CIB1 is calcium-dependent. Interacts (via tail domain) with PLEKHB1 (via PH domain); the interaction is not affected by the presence or absence of calcium and CALM. Interacts with POLR1A. Interacts with POLR2A. Component of the B-WICH complex, at least composed of SMARCA5/SNF2H, BAZ1B/WSTF, SF3B1, DEK, MYO1C, ERCC6, MYBBP1A and DDX21. Interacts (via its IQ motifs) with CALM; this precludes interaction with YWHAB. Interacts with YWHAB; this precludes interaction with CALM. Interacts with RPS6. Interacts with actin. Interacts with LLPH. Interacts with GLUT4. Interacts (via its IQ motifs) with SH3BGRL3; the interaction is dependent on calcium and takes place at membrane ruffles.

The protein localises to the cytoplasm. Its subcellular location is the nucleus. It localises to the cell cortex. The protein resides in the cell projection. It is found in the stereocilium membrane. The protein localises to the cytoplasmic vesicle. Its subcellular location is the ruffle membrane. Functionally, myosins are actin-based motor molecules with ATPase activity. Unconventional myosins serve in intracellular movements. Their highly divergent tails are presumed to bind to membranous compartments, which would be moved relative to actin filaments. Involved in glucose transporter recycling in response to insulin by regulating movement of intracellular GLUT4-containing vesicles to the plasma membrane. Component of the hair cell's (the sensory cells of the inner ear) adaptation-motor complex. Acts as a mediator of adaptation of mechanoelectrical transduction in stereocilia of vestibular hair cells. Binds phosphoinositides and links the actin cytoskeleton to cellular membranes. The chain is Unconventional myosin-Ic (Myo1c) from Rattus norvegicus (Rat).